The following is a 108-amino-acid chain: Movement protein (108 aa).

Residues 1–25 form a disordered region; the sequence is MDASSQYSALPYPQPPRVPSAAPSA. A helical transmembrane segment spans residues 35–55; it reads EIVIFTFVSVLALYLLWLWVL. The disordered stretch occupies residues 73–108; sequence LIFGPGERPPVASADGSRPVPDPSPPVRRDLDLSRV. A compositionally biased stretch (basic and acidic residues) spans 99–108; sequence VRRDLDLSRV.

This sequence belongs to the mastrevirus movement protein family. In terms of assembly, interacts with the capsid protein (CP). Part of a MP-CP-viral DNA complex.

The protein resides in the host membrane. Functionally, involved in the viral transport within, and between cells. This Megathyrsus maximus (PanSV) protein is Movement protein.